The chain runs to 423 residues: Alpha-1-antichymotrypsin (423 aa).

The N-terminal stretch at 1–23 is a signal peptide; that stretch reads MERMLPFLALGLLVAGFCPAVLC. N-linked (GlcNAc...) asparagine glycans are attached at residues asparagine 93, asparagine 106, asparagine 127, asparagine 186, and asparagine 271. Residues 369–394 are RCL; the sequence is GTEASAATAVKITLLSALVDPMTIVR.

Belongs to the serpin family. As to quaternary structure, interacts with DNAJC1. Plasma.

It localises to the secreted. In terms of biological role, although its physiological function is unclear, it can inhibit neutrophil cathepsin G and mast cell chymase, both of which can convert angiotensin-1 to the active angiotensin-2. The polypeptide is Alpha-1-antichymotrypsin (SERPINA3) (Pongo abelii (Sumatran orangutan)).